A 212-amino-acid polypeptide reads, in one-letter code: Urease accessory protein UreG (212 aa).

19-26 (GPVGSGKT) contributes to the GTP binding site.

The protein belongs to the SIMIBI class G3E GTPase family. UreG subfamily. As to quaternary structure, homodimer. UreD, UreF and UreG form a complex that acts as a GTP-hydrolysis-dependent molecular chaperone, activating the urease apoprotein by helping to assemble the nickel containing metallocenter of UreC. The UreE protein probably delivers the nickel.

The protein localises to the cytoplasm. Facilitates the functional incorporation of the urease nickel metallocenter. This process requires GTP hydrolysis, probably effectuated by UreG. This is Urease accessory protein UreG from Vibrio parahaemolyticus.